We begin with the raw amino-acid sequence, 868 residues long: MSDNRRRRREEDDSDSENELPPSSPQQHFRGGMNPVSSPIGSPDMINPEGDDNEVDDVPDIDEVEEQMNEVDLMDDNMYEDYAADHNRDRYDPDQVDDREQQELSLSERRRIDAQLNERDRLLRNVAYIDDEDEEQEGAAQLDEMGLPVQRRRRRRQYEDLENSDDDLLSDMDIDPLREELTLESLSNVKANSYSEWITQPNVSRTIARELKSFLLEYTDETGRSVYGARIRTLGEMNSESLEVNYRHLAESKAILALFLAKCPEEMLKIFDLVAMEATELHYPDYARIHSEIHVRISDFPTIYSLRELRESNLSSLVRVTGVVTRRTGVFPQLKYVKFNCLKCGSILGPFFQDSNEEIRISFCTNCKSKGPFRVNGEKTVYRNYQRVTLQEAPGTVPPGRLPRHREVILLADLVDVSKPGEEVEVTGIYKNNYDGNLNAKNGFPVFATIIEANSIKRREGNTANEGEEGLDVFSWTEEEEREFRKISRDRGIIDKIISSMAPSIYGHRDIKTAVACSLFGGVPKNVNGKHSIRGDINVLLLGDPGTAKSQILKYVEKTAHRAVFATGQGASAVGLTASVRKDPITKEWTLEGGALVLADKGVCLIDEFDKMNDQDRTSIHEAMEQQSISISKAGIVTTLQARCSIIAAANPNGGRYNSTLPLAQNVSLTEPILSRFDILCVVRDLVDEEADERLATFVVDSHVRSHPENDEDREGEELKNNGESAIEQGEDEINEQLNARQRRLQRQRKKEEEISPIPQELLMKYIHYARTKIYPKLHQMDMDKVSRVYADLRRESISTGSFPITVRHLESILRIAESFAKMRLSEFVSSYDLDRAIKVVVDSFVDAQKVSVRRQLRRSFAIYTLGH.

2 disordered regions span residues 1-65 and 87-106; these read MSDN…DEVE and NRDR…ELSL. Phosphoserine is present on residues Ser14, Ser16, and Ser23. Over residues 49-65 the composition is skewed to acidic residues; sequence EGDDNEVDDVPDIDEVE. Ser164 and Ser170 each carry phosphoserine. Residues 341-367 form a C4-type zinc finger; sequence CLKCGSILGPFFQDSNEEIRISFCTNC. The MCM domain maps to 493 to 700; sequence IIDKIISSMA…ADERLATFVV (208 aa). 543–550 serves as a coordination point for ATP; that stretch reads GDPGTAKS. Residues 675–678 carry the Arginine finger motif; it reads SRFD. The interval 704–728 is disordered; the sequence is VRSHPENDEDREGEELKNNGESAIE.

Belongs to the MCM family. Component of the MCM2-7 complex. The complex forms a toroidal hexameric ring with the proposed subunit order MCM2-MCM6-MCM4-MCM7-MCM3-MCM5; loaded onto DNA, forms a head-head double hexamer.

It is found in the nucleus. It catalyses the reaction ATP + H2O = ADP + phosphate + H(+). Its function is as follows. Acts as a component of the MCM2-7 complex (MCM complex) which is the putative replicative helicase essential for 'once per cell cycle' DNA replication initiation and elongation in eukaryotic cells. The active ATPase sites in the MCM2-7 ring are formed through the interaction surfaces of two neighboring subunits such that a critical structure of a conserved arginine finger motif is provided in trans relative to the ATP-binding site of the Walker A box of the adjacent subunit. The six ATPase active sites, however, are likely to contribute differentially to the complex helicase activity; specifically the MCM2-MCM5 association is proposed to be reversible and to mediate a open ring conformation which may facilitate DNA loading. Once loaded onto DNA, double hexamers can slide on dsDNA in the absence of ATPase activity. Necessary for cell growth. The sequence is that of DNA replication licensing factor MCM2 (MCM2) from Saccharomyces cerevisiae (strain ATCC 204508 / S288c) (Baker's yeast).